The chain runs to 402 residues: Prophage integrase IntZ (402 aa).

In terms of domain architecture, Core-binding (CB) spans A103–V183. Residues G206–M381 form the Tyr recombinase domain. Residues R244, K271, H332, R335, and H359 contribute to the active site. Y368 functions as the O-(3'-phospho-DNA)-tyrosine intermediate in the catalytic mechanism.

The protein belongs to the 'phage' integrase family.

Integrase is necessary for integration of the phage into the host genome by site-specific recombination. In conjunction with excisionase, integrase is also necessary for excision of the prophage from the host genome. The sequence is that of Prophage integrase IntZ (intZ) from Escherichia coli (strain K12).